A 233-amino-acid chain; its full sequence is Biosynthetic peptidoglycan transglycosylase (233 aa).

Residues Leu4–Leu24 form a helical membrane-spanning segment.

This sequence belongs to the glycosyltransferase 51 family.

Its subcellular location is the cell inner membrane. It carries out the reaction [GlcNAc-(1-&gt;4)-Mur2Ac(oyl-L-Ala-gamma-D-Glu-L-Lys-D-Ala-D-Ala)](n)-di-trans,octa-cis-undecaprenyl diphosphate + beta-D-GlcNAc-(1-&gt;4)-Mur2Ac(oyl-L-Ala-gamma-D-Glu-L-Lys-D-Ala-D-Ala)-di-trans,octa-cis-undecaprenyl diphosphate = [GlcNAc-(1-&gt;4)-Mur2Ac(oyl-L-Ala-gamma-D-Glu-L-Lys-D-Ala-D-Ala)](n+1)-di-trans,octa-cis-undecaprenyl diphosphate + di-trans,octa-cis-undecaprenyl diphosphate + H(+). It functions in the pathway cell wall biogenesis; peptidoglycan biosynthesis. Peptidoglycan polymerase that catalyzes glycan chain elongation from lipid-linked precursors. This is Biosynthetic peptidoglycan transglycosylase from Cupriavidus metallidurans (strain ATCC 43123 / DSM 2839 / NBRC 102507 / CH34) (Ralstonia metallidurans).